A 156-amino-acid polypeptide reads, in one-letter code: Cyanate hydratase (156 aa).

Catalysis depends on residues arginine 96, glutamate 99, and serine 122.

Belongs to the cyanase family.

The catalysed reaction is cyanate + hydrogencarbonate + 3 H(+) = NH4(+) + 2 CO2. In terms of biological role, catalyzes the reaction of cyanate with bicarbonate to produce ammonia and carbon dioxide. The chain is Cyanate hydratase from Serratia proteamaculans (strain 568).